The primary structure comprises 1394 residues: Leucine-rich PPR motif-containing protein, mitochondrial (1394 aa).

Residues 1–59 (MAALLRSARWLLRAGAAPRLPLSLRLLPGGPGRLHAASYLPAARAGPVAGGLLSPARLY) constitute a mitochondrion transit peptide. PPR repeat units follow at residues 126-160 (LLRS…GAVY), 161-195 (DVSH…NIQP), 196-230 (NRVT…DLPV), 231-265 (TEAV…GIEP), 266-300 (GPDT…ELHL), 301-335 (MDRD…RRYI), 403-437 (HSFP…GFPI), and 438-472 (RPHY…GVHP). An N6-acetyllysine mark is found at Lys155, Lys187, and Lys226. Residue Lys292 is modified to N6-acetyllysine. An N6-acetyllysine mark is found at Lys463 and Lys613. 6 PPR repeats span residues 678–709 (IRDV…ESDM), 710–746 (VTGG…SAVL), 747–784 (DTGK…IKDT), 785–820 (TALS…LAEP), 821–856 (STNI…KVLP), and 954–988 (RDQM…NVIP). Residues 712–1067 (GGYAALINLC…AKEQNIVFNA (356 aa)) are interaction with BECN1 and Aedes aegypti venom allergen-1. N6-acetyllysine is present on residues Lys726 and Lys750. Ser1026, Ser1027, and Ser1029 each carry phosphoserine. 6 PPR repeats span residues 1031–1065 (TEPD…NIVF), 1066–1102 (NAET…GFTL), 1103–1137 (NDAA…QQTP), 1138–1175 (SRLA…IGLS), 1176–1210 (KMVF…ENKV), and 1317–1351 (KEEA…NTKL). An RNA-binding region spans residues 1121–1394 (KEAVTTLKTV…QLRKLRENSS (274 aa)). A Phosphothreonine modification is found at Thr1136. Ser1138 is modified (phosphoserine).

In terms of assembly, component of mRNP complexes associated with HNRPA1. Component of the complex, at least composed of LRPPRC, BECN1 and BCL2; the interactions prevent BECN1 from forming an autophagy-inducing complex with PIK3C3. Interacts with CECR2, HEBP2, MAP1S and UXT. Interacts with PPARGC1A. Interacts with FOXO1. Interacts (via N-terminus) with EIF4E; the interaction promotes association of EIF4E with 4ESE-containing mRNAs. Interacts with exportin XPO1/CRM1; interacts both alone and in complex with EIF4E and 4ESE-containing mRNAs to form an EIF4E-dependent mRNA export complex. Interacts with importin IPO8; the interaction occurs when LRPPRC is in its RNA-free form and returns LRPPRC to the nucleus for further export rounds. Interacts with BECN1. Interacts with Aedes aegypti venom allergen-1; the interaction interrupts BECN1 and LRPPRC association. As to expression, expressed ubiquitously. Expression is highest in heart, skeletal muscle, kidney and liver, intermediate in brain, non-mucosal colon, spleen and placenta, and lowest in small intestine, thymus, lung and peripheral blood leukocytes.

It is found in the mitochondrion. Its subcellular location is the nucleus. The protein resides in the nucleoplasm. It localises to the nucleus inner membrane. The protein localises to the nucleus outer membrane. Functionally, may play a role in RNA metabolism in both nuclei and mitochondria. In the nucleus binds to HNRPA1-associated poly(A) mRNAs and is part of nmRNP complexes at late stages of mRNA maturation which are possibly associated with nuclear mRNA export. Positively modulates nuclear export of mRNAs containing the EIF4E sensitivity element (4ESE) by binding simultaneously to both EIF4E and the 4ESE and acting as a platform for assembly for the RNA export complex. Also binds to exportin XPO1/CRM1 to engage the nuclear pore and traffic the bound mRNAs to the cytoplasm. May bind mature mRNA in the nucleus outer membrane. In mitochondria binds to poly(A) mRNA. Plays a role in translation or stability of mitochondrially encoded cytochrome c oxidase (COX) subunits. May be involved in transcription regulation. Cooperates with PPARGC1A to regulate certain mitochondrially encoded genes and gluconeogenic genes and may regulate docking of PPARGC1A to transcription factors. Seems to be involved in the transcription regulation of the multidrug-related genes MDR1 and MVP. Part of a nuclear factor that binds to the invMED1 element of MDR1 and MVP gene promoters. Binds single-stranded DNA. Required for maintaining mitochondrial potential. Suppresses the initiation of basal levels of autophagy and mitophagy by sustaining BCL2 levels. This Homo sapiens (Human) protein is Leucine-rich PPR motif-containing protein, mitochondrial (LRPPRC).